The sequence spans 94 residues: uncharacterized protein (94 aa).

An N-terminal signal peptide occupies residues 1–26; it reads MNDQRDQAVPWATGLAVAGFVAAVIA. 2 helical membrane passes run 42–62 and 71–91; these read LLAVGLNIVAVSGLAPTLWGW and FVLGAAVGVAGAWLALLALTL.

Its subcellular location is the cell membrane. This is an uncharacterized protein from Mycobacterium tuberculosis (strain CDC 1551 / Oshkosh).